The following is a 401-amino-acid chain: 3-oxoadipyl-CoA/3-oxo-5,6-dehydrosuberyl-CoA thiolase (401 aa).

The active-site Acyl-thioester intermediate is the C90. Catalysis depends on proton acceptor residues H357 and C387.

This sequence belongs to the thiolase-like superfamily. Thiolase family.

The catalysed reaction is succinyl-CoA + acetyl-CoA = 3-oxoadipyl-CoA + CoA. It carries out the reaction 2,3-didehydroadipoyl-CoA + acetyl-CoA = 3-oxo-5,6-didehydrosuberyl-CoA + CoA. The protein operates within aromatic compound metabolism; phenylacetate degradation. Its function is as follows. Catalyzes the thiolytic cleavage of the beta-keto C8 intermediate 3-oxo-5,6-dehydrosuberyl-CoA with CoA to yield the C6 intermediate 2,3-dehydroadipyl-CoA and acetyl-CoA. Besides it catalyzes also the last step of the pathway, in which 3-oxoadipyl-CoA similarly is cleaved to acetyl-CoA and succinyl-CoA. This is 3-oxoadipyl-CoA/3-oxo-5,6-dehydrosuberyl-CoA thiolase (paaJ) from Escherichia coli (strain K12).